The primary structure comprises 166 residues: Large ribosomal subunit protein uL10 (166 aa).

Belongs to the universal ribosomal protein uL10 family. In terms of assembly, part of the ribosomal stalk of the 50S ribosomal subunit. The N-terminus interacts with L11 and the large rRNA to form the base of the stalk. The C-terminus forms an elongated spine to which L12 dimers bind in a sequential fashion forming a multimeric L10(L12)X complex.

Forms part of the ribosomal stalk, playing a central role in the interaction of the ribosome with GTP-bound translation factors. This chain is Large ribosomal subunit protein uL10, found in Ureaplasma parvum serovar 3 (strain ATCC 27815 / 27 / NCTC 11736).